The primary structure comprises 406 residues: Acetamidase (406 aa).

Residues 387-399 (CRPRSSTSTSPRR) show a composition bias toward low complexity. Residues 387-406 (CRPRSSTSTSPRRQGPAEGR) form a disordered region.

The protein belongs to the acetamidase/formamidase family.

It catalyses the reaction a monocarboxylic acid amide + H2O = a monocarboxylate + NH4(+). The enzyme catalyses acetamide + H2O = acetate + NH4(+). Its function is as follows. Allows acetamide to be used as a sole carbon or nitrogen source. The chain is Acetamidase (amdA) from Mycolicibacterium smegmatis (Mycobacterium smegmatis).